Reading from the N-terminus, the 563-residue chain is Coiled-coil domain-containing protein 38 (563 aa).

The stretch at 128 to 211 (TKKKTIKRFE…SIKSDIAKTE (84 aa)) forms a coiled coil. A disordered region spans residues 265-310 (DNSIDSDKMSVSEEWSSRRGSQGGRHGKHTLGQDSRKSSGFTRPES). The segment covering 269 to 281 (DSDKMSVSEEWSS) has biased composition (basic and acidic residues). 2 coiled-coil regions span residues 361–415 (QDVD…RSRL) and 454–522 (NAVQ…AVAQ). A disordered region spans residues 543-563 (QELLLVSDTRSKSQDEEYFFS).

As to quaternary structure, interacts with CCDC42, CFAP53, IFT88 and ODF2. Interacts with CCDC146. Interacts with TEKT3. Interacts with ubiquitinated histone H2A. In terms of tissue distribution, expressed exclusively in testis where it is detected mainly in spermatogonia and spermatocytes (at protein level).

It is found in the cytoplasm. Its subcellular location is the cytoskeleton. The protein resides in the microtubule organizing center. The protein localises to the centrosome. It localises to the perinuclear region. It is found in the cell projection. Its subcellular location is the cilium. The protein resides in the flagellum. In terms of biological role, essential for male fertility. Required for sperm flagellum biogenesis. Also required for acrosome biogenesis. Required for the attachment of developing acrosomes to the nucleus during spermiogenesis and may be involved in the transport of fibrous sheath components. The chain is Coiled-coil domain-containing protein 38 (Ccdc38) from Mus musculus (Mouse).